The primary structure comprises 146 residues: Ribonuclease H (146 aa).

Positions Met-1–Asp-142 constitute an RNase H type-1 domain. Asp-9, Glu-47, Asp-70, and Asp-134 together coordinate Mg(2+).

Belongs to the RNase H family. Monomer. Requires Mg(2+) as cofactor.

The protein resides in the cytoplasm. It catalyses the reaction Endonucleolytic cleavage to 5'-phosphomonoester.. Endonuclease that specifically degrades the RNA of RNA-DNA hybrids. This chain is Ribonuclease H, found in Ruthia magnifica subsp. Calyptogena magnifica.